The following is a 641-amino-acid chain: Choline O-acetyltransferase (641 aa).

Positions 1 to 29 are disordered; it reads MPILEKTPPKMAAKSPSSEEEPGLPKLPV. Serine 17 carries the phosphoserine modification. The active-site Proton acceptor is histidine 335. At serine 366 the chain carries Phosphoserine. Residues 413–425, serine 451, and glutamine 552 contribute to the CoA site; that span reads GKTFIKQQKCSPD. Positions 619–641 are disordered; the sequence is QSGMGKPLATKEKVTRPSQVHQP.

It belongs to the carnitine/choline acetyltransferase family.

The enzyme catalyses choline + acetyl-CoA = acetylcholine + CoA. Catalyzes the reversible synthesis of acetylcholine (ACh) from acetyl CoA and choline at cholinergic synapses. This Sus scrofa (Pig) protein is Choline O-acetyltransferase (CHAT).